The chain runs to 454 residues: Bifunctional protein GlmU (454 aa).

The interval 1–225 (MNIVILAAGM…LWETLGVNSK (225 aa)) is pyrophosphorylase. UDP-N-acetyl-alpha-D-glucosamine-binding positions include 6–9 (LAAG), Lys-20, Gln-71, 76–77 (GT), 98–100 (YGD), Gly-135, Glu-150, Asn-165, and Asn-223. Residue Asp-100 participates in Mg(2+) binding. Position 223 (Asn-223) interacts with Mg(2+). The tract at residues 226–246 (VQLAEIERIHQRNIAQRLLEA) is linker. Residues 247 to 454 (GVTLLDPARI…WQRPVKQPKK (208 aa)) are N-acetyltransferase. Arg-329 and Lys-347 together coordinate UDP-N-acetyl-alpha-D-glucosamine. The active-site Proton acceptor is the His-359. UDP-N-acetyl-alpha-D-glucosamine is bound by residues Tyr-362 and Asn-373. Residues Ala-376, 382–383 (NY), Ser-401, Ala-419, and Arg-436 each bind acetyl-CoA.

The protein in the N-terminal section; belongs to the N-acetylglucosamine-1-phosphate uridyltransferase family. It in the C-terminal section; belongs to the transferase hexapeptide repeat family. In terms of assembly, homotrimer. The cofactor is Mg(2+).

Its subcellular location is the cytoplasm. It catalyses the reaction alpha-D-glucosamine 1-phosphate + acetyl-CoA = N-acetyl-alpha-D-glucosamine 1-phosphate + CoA + H(+). It carries out the reaction N-acetyl-alpha-D-glucosamine 1-phosphate + UTP + H(+) = UDP-N-acetyl-alpha-D-glucosamine + diphosphate. It functions in the pathway nucleotide-sugar biosynthesis; UDP-N-acetyl-alpha-D-glucosamine biosynthesis; N-acetyl-alpha-D-glucosamine 1-phosphate from alpha-D-glucosamine 6-phosphate (route II): step 2/2. The protein operates within nucleotide-sugar biosynthesis; UDP-N-acetyl-alpha-D-glucosamine biosynthesis; UDP-N-acetyl-alpha-D-glucosamine from N-acetyl-alpha-D-glucosamine 1-phosphate: step 1/1. Its pathway is bacterial outer membrane biogenesis; LPS lipid A biosynthesis. Its function is as follows. Catalyzes the last two sequential reactions in the de novo biosynthetic pathway for UDP-N-acetylglucosamine (UDP-GlcNAc). The C-terminal domain catalyzes the transfer of acetyl group from acetyl coenzyme A to glucosamine-1-phosphate (GlcN-1-P) to produce N-acetylglucosamine-1-phosphate (GlcNAc-1-P), which is converted into UDP-GlcNAc by the transfer of uridine 5-monophosphate (from uridine 5-triphosphate), a reaction catalyzed by the N-terminal domain. The polypeptide is Bifunctional protein GlmU (Cupriavidus metallidurans (strain ATCC 43123 / DSM 2839 / NBRC 102507 / CH34) (Ralstonia metallidurans)).